Here is a 704-residue protein sequence, read N- to C-terminus: ATP-dependent DNA helicase Hel308 (704 aa).

ATP is bound by residues glutamine 31 and 49–56; that span reads SPTASGKT. Residues 36–200 enclose the Helicase ATP-binding domain; the sequence is RKGLLDGKRL…WLNAELVATN (165 aa). Positions 148 to 151 match the DEAH box motif; sequence DEFH. The region spanning 235 to 439 is the Helicase C-terminal domain; the sequence is AIIAYTLDIV…AFYSFLISII (205 aa). The segment at 366-645 is binds Hjc; the sequence is VVGYMDLIPV…LHARVKDGVK (280 aa). A required for helicase activity region spans residues 432–644; that stretch reads YSFLISIIAS…ELHARVKDGV (213 aa). The interval 646 to 704 is inhibits intrinsic ATPase, and helicase; that stretch reads PELIELVKIPGIGRVRARLLYQHDIKKPEDIVLNPEKVKQLLGPNLGEKIVREAARTIA.

The protein belongs to the helicase family. Hel308 subfamily. Monomer; forms a 1:2 complex with Hjc, which may form a complex with Holliday junction DNA. The cofactor is Mg(2+).

The enzyme catalyses Couples ATP hydrolysis with the unwinding of duplex DNA by translocating in the 3'-5' direction.. It catalyses the reaction ATP + H2O = ADP + phosphate + H(+). It carries out the reaction Couples ATP hydrolysis with the unwinding of duplex DNA at the replication fork by translocating in the 5'-3' direction. This creates two antiparallel DNA single strands (ssDNA). The leading ssDNA polymer is the template for DNA polymerase III holoenzyme which synthesizes a continuous strand.. With respect to regulation, helicase activity is inhibited by Hjc and by PCNA123 and PCNA323. An ATP, Mg(2+)-dependent DNA 3'-5' and 5'-3' helicase that may be involved in repair of stalled replication forks. Stimulated by both ss and dsDNA. Unwinds both leading and lagging strands in replication fork structures, unlike orthologs in P.furiosus and M.thermautotrophicus which only unwind the lagging strand and only have 3'-5' helicase activity. Preferentially binds dsDNA with overhangs or branched DNA. Able to anneal DNA substrates that could form a replication fork-like structure, has replication fork reversal activity (at least in vitro). In Sulfurisphaera tokodaii (strain DSM 16993 / JCM 10545 / NBRC 100140 / 7) (Sulfolobus tokodaii), this protein is ATP-dependent DNA helicase Hel308.